Consider the following 441-residue polypeptide: Enolase (441 aa).

Residue Q164 participates in (2R)-2-phosphoglycerate binding. E206 functions as the Proton donor in the catalytic mechanism. D243, E289, and D316 together coordinate Mg(2+). (2R)-2-phosphoglycerate-binding residues include K341, R370, S371, and K392. The active-site Proton acceptor is K341.

This sequence belongs to the enolase family. The cofactor is Mg(2+).

It is found in the cytoplasm. The protein localises to the secreted. It localises to the cell surface. The catalysed reaction is (2R)-2-phosphoglycerate = phosphoenolpyruvate + H2O. It participates in carbohydrate degradation; glycolysis; pyruvate from D-glyceraldehyde 3-phosphate: step 4/5. Its function is as follows. Catalyzes the reversible conversion of 2-phosphoglycerate (2-PG) into phosphoenolpyruvate (PEP). It is essential for the degradation of carbohydrates via glycolysis. This is Enolase from Leuconostoc citreum (strain KM20).